The sequence spans 212 residues: Fibroblast growth factor 8b (212 aa).

Residues 1 to 27 (MRLKSSRLGYLFLQFMTLCFYTQMTMQ) form the signal peptide. An N-linked (GlcNAc...) asparagine glycan is attached at Asn139.

It belongs to the heparin-binding growth factors family.

It is found in the secreted. In terms of biological role, may act as signaling molecule during development of the midbrain-hindbrain boundary (MHB) organizer, and be involved in patterning of the nervous system. In Danio rerio (Zebrafish), this protein is Fibroblast growth factor 8b (fgf8b).